Here is a 570-residue protein sequence, read N- to C-terminus: Hydroxylamine reductase (570 aa).

[4Fe-4S] cluster contacts are provided by Cys-5, Cys-8, Cys-17, and Cys-23. Hybrid [4Fe-2O-2S] cluster is bound by residues His-266, Glu-290, Cys-334, Cys-425, Cys-453, Cys-478, Glu-513, and Lys-515. At Cys-425 the chain carries Cysteine persulfide.

It belongs to the HCP family. Requires [4Fe-4S] cluster as cofactor. Hybrid [4Fe-2O-2S] cluster is required as a cofactor.

It is found in the cytoplasm. It carries out the reaction A + NH4(+) + H2O = hydroxylamine + AH2 + H(+). Functionally, catalyzes the reduction of hydroxylamine to form NH(3) and H(2)O. The protein is Hydroxylamine reductase of Clostridium botulinum (strain ATCC 19397 / Type A).